The chain runs to 228 residues: Ribose-5-phosphate isomerase A (228 aa).

Substrate contacts are provided by residues 32-35 (TGST), 85-88 (DGAD), and 98-101 (KGGG). Glutamate 107 acts as the Proton acceptor in catalysis. Position 125 (lysine 125) interacts with substrate.

Belongs to the ribose 5-phosphate isomerase family. In terms of assembly, homodimer.

The catalysed reaction is aldehydo-D-ribose 5-phosphate = D-ribulose 5-phosphate. It functions in the pathway carbohydrate degradation; pentose phosphate pathway; D-ribose 5-phosphate from D-ribulose 5-phosphate (non-oxidative stage): step 1/1. In terms of biological role, catalyzes the reversible conversion of ribose-5-phosphate to ribulose 5-phosphate. The protein is Ribose-5-phosphate isomerase A of Cupriavidus pinatubonensis (strain JMP 134 / LMG 1197) (Cupriavidus necator (strain JMP 134)).